A 96-amino-acid polypeptide reads, in one-letter code: 5-hydroxytryptamine receptor 2B (96 aa).

At 1 to 8 (CNQSTLQM) the chain is on the extracellular side. N-linked (GlcNAc...) asparagine glycosylation is present at Asn-2. A helical membrane pass occupies residues 9 to 30 (LLEIFVWIGYVSSGVNPLVYTL). An NPxxY motif; important for ligand-induced conformation changes and signaling motif is present at residues 24-28 (NPLVY). Topologically, residues 31–96 (FNKTFRDAFG…STMYQSPVRL (66 aa)) are cytoplasmic. Residue Cys-45 is the site of S-palmitoyl cysteine attachment.

The protein belongs to the G-protein coupled receptor 1 family. In terms of assembly, interacts (via C-terminus) with MPDZ.

The protein localises to the cell membrane. The protein resides in the synapse. Its subcellular location is the synaptosome. Its function is as follows. G-protein coupled receptor for 5-hydroxytryptamine (serotonin). Also functions as a receptor for various ergot alkaloid derivatives and psychoactive substances. Ligand binding causes a conformation change that triggers signaling via guanine nucleotide-binding proteins (G proteins) and modulates the activity of downstream effectors. HTR2B is coupled to G(q)/G(11) G alpha proteins and activates phospholipase C-beta, releasing diacylglycerol (DAG) and inositol 1,4,5-trisphosphate (IP3) second messengers that modulate the activity of phosphatidylinositol 3-kinase and promote the release of Ca(2+) ions from intracellular stores, respectively. Beta-arrestin family members inhibit signaling via G proteins and mediate activation of alternative signaling pathways. Plays a role in the regulation of dopamine and 5-hydroxytryptamine release, 5-hydroxytryptamine uptake and in the regulation of extracellular dopamine and 5-hydroxytryptamine levels, and thereby affects neural activity. May play a role in the perception of pain. Plays a role in the regulation of behavior, including impulsive behavior. Required for normal proliferation of embryonic cardiac myocytes and normal heart development. Protects cardiomyocytes against apoptosis. Plays a role in the adaptation of pulmonary arteries to chronic hypoxia. Plays a role in vasoconstriction. Required for normal osteoblast function and proliferation, and for maintaining normal bone density. Required for normal proliferation of the interstitial cells of Cajal in the intestine. The polypeptide is 5-hydroxytryptamine receptor 2B (HTR2B) (Cavia porcellus (Guinea pig)).